The following is a 343-amino-acid chain: Phosphatidylglycerol--prolipoprotein diacylglyceryl transferase (343 aa).

A run of 4 helical transmembrane segments spans residues 22-42 (IPIR…LIIG), 54-74 (GVIY…GRLY), 97-117 (VWEG…GAWI), and 123-143 (GIPL…AQAI). R145 is a binding site for a 1,2-diacyl-sn-glycero-3-phospho-(1'-sn-glycerol). The next 2 membrane-spanning stretches (helical) occupy residues 193-213 (VVHP…VLLI) and 257-277 (VNSF…LLAP). Positions 283–343 (PATLGGTPSS…SADNSGIVEK (61 aa)) are disordered. The segment covering 295–325 (GGDDTAETEATADTEDTEDTEDGVTDAPEAD) has biased composition (acidic residues).

Belongs to the Lgt family.

The protein localises to the cell membrane. The enzyme catalyses L-cysteinyl-[prolipoprotein] + a 1,2-diacyl-sn-glycero-3-phospho-(1'-sn-glycerol) = an S-1,2-diacyl-sn-glyceryl-L-cysteinyl-[prolipoprotein] + sn-glycerol 1-phosphate + H(+). The protein operates within protein modification; lipoprotein biosynthesis (diacylglyceryl transfer). Its function is as follows. Catalyzes the transfer of the diacylglyceryl group from phosphatidylglycerol to the sulfhydryl group of the N-terminal cysteine of a prolipoprotein, the first step in the formation of mature lipoproteins. This chain is Phosphatidylglycerol--prolipoprotein diacylglyceryl transferase, found in Mycobacteroides abscessus (strain ATCC 19977 / DSM 44196 / CCUG 20993 / CIP 104536 / JCM 13569 / NCTC 13031 / TMC 1543 / L948) (Mycobacterium abscessus).